Here is a 360-residue protein sequence, read N- to C-terminus: UDP-N-acetylglucosamine--N-acetylmuramyl-(pentapeptide) pyrophosphoryl-undecaprenol N-acetylglucosamine transferase (360 aa).

Ser-198 and Gln-289 together coordinate UDP-N-acetyl-alpha-D-glucosamine.

It belongs to the glycosyltransferase 28 family. MurG subfamily.

It localises to the cell membrane. It catalyses the reaction Mur2Ac(oyl-L-Ala-gamma-D-Glu-L-Lys-D-Ala-D-Ala)-di-trans,octa-cis-undecaprenyl diphosphate + UDP-N-acetyl-alpha-D-glucosamine = beta-D-GlcNAc-(1-&gt;4)-Mur2Ac(oyl-L-Ala-gamma-D-Glu-L-Lys-D-Ala-D-Ala)-di-trans,octa-cis-undecaprenyl diphosphate + UDP + H(+). The protein operates within cell wall biogenesis; peptidoglycan biosynthesis. Cell wall formation. Catalyzes the transfer of a GlcNAc subunit on undecaprenyl-pyrophosphoryl-MurNAc-pentapeptide (lipid intermediate I) to form undecaprenyl-pyrophosphoryl-MurNAc-(pentapeptide)GlcNAc (lipid intermediate II). The protein is UDP-N-acetylglucosamine--N-acetylmuramyl-(pentapeptide) pyrophosphoryl-undecaprenol N-acetylglucosamine transferase of Streptococcus pyogenes serotype M49 (strain NZ131).